The chain runs to 82 residues: Small ribosomal subunit protein bS16 (82 aa).

Belongs to the bacterial ribosomal protein bS16 family.

This chain is Small ribosomal subunit protein bS16, found in Shigella boydii serotype 18 (strain CDC 3083-94 / BS512).